The sequence spans 426 residues: Serine--tRNA ligase (426 aa).

233 to 235 (TAE) provides a ligand contact to L-serine. Residue 264-266 (RRE) participates in ATP binding. Glu-287 lines the L-serine pocket. 351-354 (EISS) lines the ATP pocket. Ser-386 contributes to the L-serine binding site.

This sequence belongs to the class-II aminoacyl-tRNA synthetase family. Type-1 seryl-tRNA synthetase subfamily. As to quaternary structure, homodimer. The tRNA molecule binds across the dimer.

It localises to the cytoplasm. It carries out the reaction tRNA(Ser) + L-serine + ATP = L-seryl-tRNA(Ser) + AMP + diphosphate + H(+). The catalysed reaction is tRNA(Sec) + L-serine + ATP = L-seryl-tRNA(Sec) + AMP + diphosphate + H(+). The protein operates within aminoacyl-tRNA biosynthesis; selenocysteinyl-tRNA(Sec) biosynthesis; L-seryl-tRNA(Sec) from L-serine and tRNA(Sec): step 1/1. Catalyzes the attachment of serine to tRNA(Ser). Is also able to aminoacylate tRNA(Sec) with serine, to form the misacylated tRNA L-seryl-tRNA(Sec), which will be further converted into selenocysteinyl-tRNA(Sec). This Prochlorococcus marinus (strain NATL2A) protein is Serine--tRNA ligase.